The chain runs to 282 residues: 2-dehydro-3-deoxyphosphooctonate aldolase (282 aa).

It belongs to the KdsA family.

It is found in the cytoplasm. The catalysed reaction is D-arabinose 5-phosphate + phosphoenolpyruvate + H2O = 3-deoxy-alpha-D-manno-2-octulosonate-8-phosphate + phosphate. It participates in carbohydrate biosynthesis; 3-deoxy-D-manno-octulosonate biosynthesis; 3-deoxy-D-manno-octulosonate from D-ribulose 5-phosphate: step 2/3. It functions in the pathway bacterial outer membrane biogenesis; lipopolysaccharide biosynthesis. This Shewanella sp. (strain ANA-3) protein is 2-dehydro-3-deoxyphosphooctonate aldolase.